The chain runs to 685 residues: DNA-directed RNA polymerase subunit beta' (685 aa).

Zn(2+) is bound by residues cysteine 69, cysteine 71, cysteine 87, and cysteine 90. Mg(2+) is bound by residues aspartate 492, aspartate 494, and aspartate 496.

This sequence belongs to the RNA polymerase beta' chain family. RpoC1 subfamily. In terms of assembly, in plastids the minimal PEP RNA polymerase catalytic core is composed of four subunits: alpha, beta, beta', and beta''. When a (nuclear-encoded) sigma factor is associated with the core the holoenzyme is formed, which can initiate transcription. Mg(2+) is required as a cofactor. It depends on Zn(2+) as a cofactor.

It localises to the plastid. Its subcellular location is the chloroplast. The catalysed reaction is RNA(n) + a ribonucleoside 5'-triphosphate = RNA(n+1) + diphosphate. DNA-dependent RNA polymerase catalyzes the transcription of DNA into RNA using the four ribonucleoside triphosphates as substrates. The chain is DNA-directed RNA polymerase subunit beta' from Dioscorea elephantipes (Elephant's foot yam).